The primary structure comprises 172 residues: CD-NTase-associated protein 7 (172 aa).

The segment at 141–172 (AQSPGINGYLENDKTYSAGGRSLTRTSVRNFV) is required for binding to CdnC and to confer phage immunity.

Belongs to the bacterial HORMA family. HORMA1 subfamily. In terms of assembly, forms complexes with CdnC with 1:1 and 2:2 stoichimetry, and a 1:1:6 CdnC:Cap7:Cap6 complex.

Functionally, sensor protein of a CBASS antivirus system. CBASS (cyclic oligonucleotide-based antiphage signaling system) provides immunity against bacteriophage. The CD-NTase protein synthesizes cyclic nucleotides in response to infection; these serve as specific second messenger signals. The signals activate a diverse range of effectors, leading to bacterial cell death and thus abortive phage infection. A type III-C(AAA) CBASS system. In terms of biological role, binds to a closure peptide (consensus His-Xaa-Xaa-Ile-Leu-Leu-Thr), which allows it to activate CdnC for second messenger synthesis. Protects E.coli strain JP313 against bacteriophage lambda cI- infection. When the cdnC-cap7-cap6-nucC operon is transformed into a susceptible strain it confers bacteriophage immunity. Mutations in the sensor (Cap7 also called HORMA) or effector proteins (CdnC, NucC) but not the disassembly protein (Cap6 also called Trip13) no longer confer immunity. The presence of the intact operon leads to culture collapse and cell death, which occurs before the phage has finished its replication cycle, thus protecting non-infected bacteria by aborting the phage infection and preventing its propagation. The polypeptide is CD-NTase-associated protein 7 (Escherichia coli (strain MS 115-1)).